A 323-amino-acid chain; its full sequence is Aldo-keto reductase family 1 member C3 (323 aa).

Residues 20–24 and aspartate 50 contribute to the NADP(+) site; that span reads GFGTY. Tyrosine 55 acts as the Proton donor in catalysis. Histidine 117 is a substrate binding site. NADP(+) contacts are provided by residues 166-167, glutamine 190, 216-221, and 270-280; these read SN, YSALGS, and KSYNEQRIREN.

This sequence belongs to the aldo/keto reductase family.

It localises to the cytoplasm. The catalysed reaction is a 3alpha-hydroxysteroid + NADP(+) = a 3-oxosteroid + NADPH + H(+). It carries out the reaction a 3alpha-hydroxysteroid + NAD(+) = a 3-oxosteroid + NADH + H(+). It catalyses the reaction prostaglandin F2alpha + NADP(+) = prostaglandin D2 + NADPH + H(+). The enzyme catalyses testosterone + NAD(+) = androst-4-ene-3,17-dione + NADH + H(+). The catalysed reaction is testosterone + NADP(+) = androst-4-ene-3,17-dione + NADPH + H(+). It carries out the reaction prostaglandin F2alpha + NADP(+) = prostaglandin H2 + NADPH + H(+). It catalyses the reaction prostaglandin D2 + NADPH + H(+) = 11beta-prostaglandin F2 + NADP(+). The enzyme catalyses prostaglandin D2-ethanolamide + NADPH + H(+) = 11beta-prostaglandin F2-ethanolamide + NADP(+). The catalysed reaction is 17beta-estradiol + NADP(+) = estrone + NADPH + H(+). It carries out the reaction 17beta-estradiol + NAD(+) = estrone + NADH + H(+). It catalyses the reaction (20S)-hydroxypregn-4-en-3-one + NADP(+) = progesterone + NADPH + H(+). The enzyme catalyses (20S)-hydroxypregn-4-en-3-one + NAD(+) = progesterone + NADH + H(+). The catalysed reaction is 5alpha-androstane-3alpha,17beta-diol + NADP(+) = 17beta-hydroxy-5alpha-androstan-3-one + NADPH + H(+). It carries out the reaction 5alpha-androstane-3alpha,17beta-diol + NAD(+) = 17beta-hydroxy-5alpha-androstan-3-one + NADH + H(+). It catalyses the reaction androsterone + NADPH + H(+) = 5alpha-androstane-3alpha,17beta-diol + NADP(+). The enzyme catalyses 5alpha-androstane-3alpha,17beta-diol + NAD(+) = androsterone + NADH + H(+). The catalysed reaction is 5alpha-androstane-3beta,17beta-diol + NADP(+) = 17beta-hydroxy-5alpha-androstan-3-one + NADPH + H(+). It carries out the reaction 9-cis-retinol + NADP(+) = 9-cis-retinal + NADPH + H(+). It functions in the pathway steroid metabolism. Cytosolic aldo-keto reductase that catalyzes the NADH and NADPH-dependent reduction of ketosteroids to hydroxysteroids. Acts as a NAD(P)(H)-dependent 3-, 17- and 20-ketosteroid reductase on the steroid nucleus and side chain and regulates the metabolism of androgens, estrogens and progesterone. Displays the ability to catalyze both oxidation and reduction in vitro, but most probably acts as a reductase in vivo since the oxidase activity measured in vitro is inhibited by physiological concentration of NADPH. Acts preferentially as a 17-ketosteroid reductase and has the highest catalytic efficiency of the AKR1C enzyme for the reduction of delta4-androstenedione to form testosterone. Reduces prostaglandin (PG) D2 to 11beta-prostaglandin F2, progesterone to 20alpha-hydroxyprogesterone and estrone to 17beta-estradiol. Catalyzes the transformation of the potent androgen dihydrotestosterone (DHT) into the less active form, 5-alpha-androstan-3-alpha,17-beta-diol (3-alpha-diol). Also displays retinaldehyde reductase activity toward 9-cis-retinal. This Pongo abelii (Sumatran orangutan) protein is Aldo-keto reductase family 1 member C3 (AKR1C3).